Consider the following 331-residue polypeptide: High-affinity nickel-transport protein NixA (331 aa).

The Cytoplasmic segment spans residues 1–5; it reads MKLWF. Residues 6 to 26 form a helical membrane-spanning segment; the sequence is PYFLAIVFLHALGLALLFMAN. Topologically, residues 27–33 are periplasmic; the sequence is NASFYAA. The helical transmembrane segment at 34–54 threads the bilayer; sequence ASMAYMLGAKHAFDADHIACI. Topologically, residues 55–66 are cytoplasmic; it reads DNTIRKLTQQGK. A helical transmembrane segment spans residues 67–87; sequence NAYGVGFYFSMGHSSVVILMT. At 88–113 the chain is on the periplasmic side; it reads IISAFAIAWAKEHTPMLEEIGGVVGT. Residues 114–135 form a helical membrane-spanning segment; that stretch reads LVSGLFLLIIGLLNAIILLDLL. At 136-178 the chain is on the cytoplasmic side; that stretch reads KIFKKSHSNESLSQQQNEEIERLLTSRGLLNRFFKPLFNFVSK. The helical transmembrane segment at 179-199 threads the bilayer; the sequence is SWHIYPIGFLFGLGFDTASEI. Over 200–225 the chain is Periplasmic; it reads ALLALSSSAIKVSMVGMLSLPILFAA. A helical transmembrane segment spans residues 226–246; the sequence is GMSLFDTLDGAFMLKAYDWAF. Over 247-252 the chain is Cytoplasmic; the sequence is KTPLRK. The helical transmembrane segment at 253–273 threads the bilayer; it reads IYYNISITALSVFIALFIGLI. Residues 274-302 lie on the Periplasmic side of the membrane; it reads ELFQVVSEKLHLKFENRLLRALQSLEFTD. Residues 303-322 traverse the membrane as a helical segment; the sequence is LGYYLVGLFVIAFLGSFFLW. Residues 323–331 are Cytoplasmic-facing; the sequence is KIKFSKLES.

This sequence belongs to the NiCoT transporter (TC 2.A.52) family.

The protein resides in the cell inner membrane. High-affinity nickel intake protein. Imports nickel ions in an energy-dependent fashion. Necessary for the expression of catalytically active urease. This Helicobacter pylori (strain ATCC 700392 / 26695) (Campylobacter pylori) protein is High-affinity nickel-transport protein NixA (nixA).